An 87-amino-acid chain; its full sequence is MDNVVLIGKKPVMNYVVAVLTQLTSNDEVIIKARGKAINKAVDVAEMIRNRFIKDIKIKKIEIGTDKVKNPDGREVNVSTIEIVLAK.

Residue Lys-9 is modified to N6-acetyllysine.

The protein belongs to the histone-like Alba family. In terms of processing, acetylated. Acetylation at Lys-9 decreases DNA-binding affinity.

The protein resides in the cytoplasm. The protein localises to the chromosome. Binds double-stranded DNA tightly but without sequence specificity. Involved in DNA compaction. The protein is DNA/RNA-binding protein Alba of Methanocaldococcus jannaschii (strain ATCC 43067 / DSM 2661 / JAL-1 / JCM 10045 / NBRC 100440) (Methanococcus jannaschii).